A 291-amino-acid polypeptide reads, in one-letter code: MTRSYLPLNSLRAFEAAARHLSFTHAAIELNVTHSAISQHVKTLEQHLNCQLFVRVSRGLMLTTEGENLLPVLNDSFDRIAGMLDRFANHRAQEKLKIGVVGTFATGVLFSQLEDFRRGYPHIDLQLSTHNNRVDPAAEGLDYTIRYGGGAWHGTEAEFLCHAPLAPLCTPDIAASLHSPADILRFTLLRSYRRDEWTAWMQAAGEHPPSPTHRVMVFDSSVTMLEAAQAGVGIAIAPVDMFTHLLASERIVQPFATQIELGSYWLTRLQSRAETPAMREFSRWLVEKMKK.

In terms of domain architecture, HTH lysR-type spans 6 to 63 (LPLNSLRAFEAAARHLSFTHAAIELNVTHSAISQHVKTLEQHLNCQLFVRVSRGLMLT). The H-T-H motif DNA-binding region spans 23-42 (FTHAAIELNVTHSAISQHVK).

The protein belongs to the LysR transcriptional regulatory family.

The protein resides in the cytoplasm. In terms of biological role, this protein is a positive regulator of gene expression of cephalosporinase (AmpC). The sequence is that of HTH-type transcriptional activator AmpR (ampR) from Enterobacter cloacae.